A 95-amino-acid polypeptide reads, in one-letter code: Small ribosomal subunit protein uS19 (95 aa).

Residues 76–95 (PTRRFGGHADKKAKKGELKK) are disordered. Residues 82-95 (GHADKKAKKGELKK) show a composition bias toward basic and acidic residues.

The protein belongs to the universal ribosomal protein uS19 family.

Functionally, protein S19 forms a complex with S13 that binds strongly to the 16S ribosomal RNA. The protein is Small ribosomal subunit protein uS19 (rpsS) of Thermotoga maritima (strain ATCC 43589 / DSM 3109 / JCM 10099 / NBRC 100826 / MSB8).